The sequence spans 229 residues: Probable queuosine precursor transporter (229 aa).

7 helical membrane passes run F6–G26, M28–T48, V49–A69, V86–F106, L118–F138, L160–V182, and V192–Y214.

Belongs to the vitamin uptake transporter (VUT/ECF) (TC 2.A.88) family. Q precursor transporter subfamily.

The protein localises to the cell membrane. Functionally, involved in the import of queuosine (Q) precursors, required for Q precursor salvage. In Bacillus subtilis (strain 168), this protein is Probable queuosine precursor transporter (ypdP).